An 83-amino-acid chain; its full sequence is Mu-theraphotoxin-Hhn2b 1 (83 aa).

A signal peptide spans 1–21; it reads MKASMFLALAGLVLLFVVCYA. The propeptide occupies 22–48; that stretch reads SESEEKEFPRELISKIFAVDDFKGEER. 3 cysteine pairs are disulfide-bonded: cysteine 50–cysteine 65, cysteine 57–cysteine 70, and cysteine 64–cysteine 77. At leucine 81 the chain carries Leucine amide.

It belongs to the neurotoxin 10 (Hwtx-1) family. 14 (Hntx-1) subfamily. As to quaternary structure, monomer. Expressed by the venom gland.

It is found in the secreted. Its function is as follows. Weakly blocks the rat SCN2A/SCN1B (Nav1.2/beta-1) sodium channel (IC(50)=68 uM) and the insect sodium channel para/tipE (IC(50)=4.3 uM), without altering the activation or inactivation kinetics (depressant toxin). In Cyriopagopus hainanus (Chinese bird spider), this protein is Mu-theraphotoxin-Hhn2b 1.